The primary structure comprises 98 residues: Co-chaperonin GroES (98 aa).

It belongs to the GroES chaperonin family. Heptamer of 7 subunits arranged in a ring. Interacts with the chaperonin GroEL.

It is found in the cytoplasm. In terms of biological role, together with the chaperonin GroEL, plays an essential role in assisting protein folding. The GroEL-GroES system forms a nano-cage that allows encapsulation of the non-native substrate proteins and provides a physical environment optimized to promote and accelerate protein folding. GroES binds to the apical surface of the GroEL ring, thereby capping the opening of the GroEL channel. In Micrococcus luteus (strain ATCC 4698 / DSM 20030 / JCM 1464 / CCM 169 / CCUG 5858 / IAM 1056 / NBRC 3333 / NCIMB 9278 / NCTC 2665 / VKM Ac-2230) (Micrococcus lysodeikticus), this protein is Co-chaperonin GroES.